The following is a 332-amino-acid chain: D-alanine--D-alanine ligase (332 aa).

Residues 124–329 (KMWFSALNIP…FPDYLLSNIN (206 aa)) form the ATP-grasp domain. Position 154 to 209 (154 to 209 (ALVNWGSIFVKAASQGSSVGCYRIDNQEDVASTLAQAFTYSDYVIVEKTISARELE)) interacts with ATP. Residues Asp283, Glu296, and Asn298 each contribute to the Mg(2+) site.

The protein belongs to the D-alanine--D-alanine ligase family. Mg(2+) is required as a cofactor. It depends on Mn(2+) as a cofactor.

Its subcellular location is the cytoplasm. It carries out the reaction 2 D-alanine + ATP = D-alanyl-D-alanine + ADP + phosphate + H(+). Its pathway is cell wall biogenesis; peptidoglycan biosynthesis. Its function is as follows. Cell wall formation. This is D-alanine--D-alanine ligase from Shewanella piezotolerans (strain WP3 / JCM 13877).